The primary structure comprises 614 residues: DNA mismatch repair protein MutL (614 aa).

A disordered region spans residues 355 to 411 (PLSTGRVSEADPSNYATQSKFDEKPRESGSQGQSSSISAPSSYSRGGEYSARSQPEL). Positions 382-401 (SGSQGQSSSISAPSSYSRGG) are enriched in low complexity.

Belongs to the DNA mismatch repair MutL/HexB family.

Its function is as follows. This protein is involved in the repair of mismatches in DNA. It is required for dam-dependent methyl-directed DNA mismatch repair. May act as a 'molecular matchmaker', a protein that promotes the formation of a stable complex between two or more DNA-binding proteins in an ATP-dependent manner without itself being part of a final effector complex. In Shewanella woodyi (strain ATCC 51908 / MS32), this protein is DNA mismatch repair protein MutL.